Reading from the N-terminus, the 211-residue chain is tRNA (guanine-N(7)-)-methyltransferase (211 aa).

Residues Glu-44, Asp-69, Asp-96, and Asp-118 each contribute to the S-adenosyl-L-methionine site. Asp-118 is a catalytic residue. Lys-122 is a substrate binding site. Residues 124–129 (KHEKRR) are interaction with RNA. Residues Asp-154 and 191–194 (TEYE) each bind substrate.

It belongs to the class I-like SAM-binding methyltransferase superfamily. TrmB family.

It carries out the reaction guanosine(46) in tRNA + S-adenosyl-L-methionine = N(7)-methylguanosine(46) in tRNA + S-adenosyl-L-homocysteine. The protein operates within tRNA modification; N(7)-methylguanine-tRNA biosynthesis. Catalyzes the formation of N(7)-methylguanine at position 46 (m7G46) in tRNA. The protein is tRNA (guanine-N(7)-)-methyltransferase of Streptococcus pyogenes serotype M6 (strain ATCC BAA-946 / MGAS10394).